The chain runs to 79 residues: MSEVNAGEICYVKKQRKGTINPNKICQPIGAMWATVGVKGTIPFVQGSQGCTTYVRYAFNRHFREPVSIATASFHEHAA.

Cys26 and Cys51 together coordinate [8Fe-7S] cluster.

Belongs to the NifD/NifK/NifE/NifN family. In terms of assembly, tetramer of two alpha and two beta chains. Forms complex with the iron protein (nitrogenase component 2). Requires [8Fe-7S] cluster as cofactor.

The catalysed reaction is N2 + 8 reduced [2Fe-2S]-[ferredoxin] + 16 ATP + 16 H2O = H2 + 8 oxidized [2Fe-2S]-[ferredoxin] + 2 NH4(+) + 16 ADP + 16 phosphate + 6 H(+). Its function is as follows. This molybdenum-iron protein is part of the nitrogenase complex that catalyzes the key enzymatic reactions in nitrogen fixation. This Methanothermococcus thermolithotrophicus (Methanococcus thermolithotrophicus) protein is Nitrogenase molybdenum-iron protein beta chain (nifK).